A 283-amino-acid chain; its full sequence is Ubiquinone biosynthesis protein COQ4, mitochondrial (283 aa).

A mitochondrion-targeting transit peptide spans 1-25; the sequence is MAIAKSVRARAVGLRSLRVLCAQRS. The Zn(2+) site is built by histidine 166, aspartate 167, histidine 170, and glutamate 182.

It belongs to the COQ4 family. Component of a multi-subunit COQ enzyme complex, composed of at least COQ3, COQ4, COQ5, COQ6, COQ7 and COQ9. The cofactor is Zn(2+).

The protein localises to the mitochondrion inner membrane. The enzyme catalyses a 4-hydroxy-3-methoxy-5-(all-trans-polyprenyl)benzoate + H(+) = a 2-methoxy-6-(all-trans-polyprenyl)phenol + CO2. It participates in cofactor biosynthesis; ubiquinone biosynthesis. Its function is as follows. Lyase that catalyzes the C1-decarboxylation of 4-hydroxy-3-methoxy-5-(all-trans-polyprenyl)benzoic acid into 2-methoxy-6-(all-trans-polyprenyl)phenol during ubiquinone biosynthesis. This Coccidioides immitis (strain RS) (Valley fever fungus) protein is Ubiquinone biosynthesis protein COQ4, mitochondrial.